The primary structure comprises 381 residues: Adaptive-response sensory kinase SasA (381 aa).

The Histidine kinase domain maps to M154–D367. At H157 the chain carries Phosphohistidine; by autocatalysis.

In terms of assembly, homooligomerizes. Interacts with KaiC. Participates in the KaiBC complex, whose core is composed of a KaiC homohexamer and 6 KaiB.

The catalysed reaction is ATP + protein L-histidine = ADP + protein N-phospho-L-histidine.. Member of the two-component regulatory system SasA/RpaA involved in genome-wide circadian gene expression. One of several clock output pathways. Participates in the Kai clock protein complex, the main circadian regulator in cyanobacteria, via its interaction with KaiC. KaiC enhances the autophosphorylation activity of SasA, which then transfers its phosphate group to RpaA to activate it. In addition to its output function, recruits fold-shifted KaiB (KaiB(fs)) to KaiC to cooperatively form the KaiB(6):KaiC(6) complex (independent of SasA kinase activity). Required for robustness of the circadian rhythm of gene expression and is involved in clock output, also required for adaptation to light/dark cycles. In Prochlorococcus marinus (strain SARG / CCMP1375 / SS120), this protein is Adaptive-response sensory kinase SasA.